We begin with the raw amino-acid sequence, 374 residues long: Phospho-2-dehydro-3-deoxyheptonate aldolase AMT16 (374 aa).

The protein belongs to the class-I DAHP synthase family.

It carries out the reaction D-erythrose 4-phosphate + phosphoenolpyruvate + H2O = 7-phospho-2-dehydro-3-deoxy-D-arabino-heptonate + phosphate. Its pathway is mycotoxin biosynthesis. Functionally, nonribosomal peptide synthetase; part of the gene clusters that mediate the biosynthesis of AM-toxins, host-selective toxins (HSTs) causing Alternaria blotch on apple, a worldwide distributed disease. AM-toxins are cyclic depsipeptides containing the 3 residues 2-hydroxy-isovaleric acid (2-HIV), dehydroalanine, L-alanine which are common for all 3 AM-toxins I to III. The fourth precursor is L-alpha-amino-methoxyphenyl-valeric acid (L-Amv) for AM-toxin I, L-alpha-amino-phenyl-valeric acid (L-Apv) for AM-toxin II, and L-alpha-amino-hydroxyphenyl-valeric acid (L-Ahv) for AM-toxin III. AM-toxins have two target sites for affecting susceptible apple cells; they cause invagination of the plasma membrane and electrolyte loss and chloroplast disorganization. The non-ribosomal peptide synthetase AMT1 contains 4 catalytic modules and is responsible for activation of each residue in AM-toxin. The aldo-keto reductase AMT2 catalyzes the conversion of 2-keto-isovaleric acid (2-KIV) to 2-hydroxy-isovaleric acid (2-HIV), one of the precursor residues incorporated by AMT1 during AM-toxin biosynthesis, by reduction of its ketone to an alcohol. The cytochrome P450 monooxygenase AMT3 and the thioesterase AMT4 are also important for AM-toxin production, but their exact function within the AM-toxin biosynthesis are not known yet. Up to 21 proteins (including AMT1 to AMT4) are predicted to be involved in AM-toxin biosynthesis since their expression ishighly up-regulated in AM-toxin-producing cultures. The protein is Phospho-2-dehydro-3-deoxyheptonate aldolase AMT16 of Alternaria alternata (Alternaria rot fungus).